The following is a 242-amino-acid chain: Ribonuclease PH (242 aa).

Phosphate is bound by residues Arg89 and 127–129; that span reads GTR.

This sequence belongs to the RNase PH family. Homohexameric ring arranged as a trimer of dimers.

The catalysed reaction is tRNA(n+1) + phosphate = tRNA(n) + a ribonucleoside 5'-diphosphate. Its function is as follows. Phosphorolytic 3'-5' exoribonuclease that plays an important role in tRNA 3'-end maturation. Removes nucleotide residues following the 3'-CCA terminus of tRNAs; can also add nucleotides to the ends of RNA molecules by using nucleoside diphosphates as substrates, but this may not be physiologically important. Probably plays a role in initiation of 16S rRNA degradation (leading to ribosome degradation) during starvation. The chain is Ribonuclease PH from Neisseria meningitidis serogroup B (strain ATCC BAA-335 / MC58).